Consider the following 185-residue polypeptide: Adenine phosphoribosyltransferase (185 aa).

The protein belongs to the purine/pyrimidine phosphoribosyltransferase family. Homodimer.

Its subcellular location is the cytoplasm. The enzyme catalyses AMP + diphosphate = 5-phospho-alpha-D-ribose 1-diphosphate + adenine. The protein operates within purine metabolism; AMP biosynthesis via salvage pathway; AMP from adenine: step 1/1. Its function is as follows. Catalyzes a salvage reaction resulting in the formation of AMP, that is energically less costly than de novo synthesis. The protein is Adenine phosphoribosyltransferase of Shewanella denitrificans (strain OS217 / ATCC BAA-1090 / DSM 15013).